The following is a 146-amino-acid chain: Late protein OPG112 (146 aa).

The chain crosses the membrane as a helical span at residues 10-32; it reads LAMTAFFGELNTLDIMALIMSIF.

It belongs to the orthopoxvirus OPG112 family.

The protein resides in the host membrane. It localises to the host cytoplasm. Functionally, contributes to the formation of crescents and immature virions (IV). Interacts with phosphatidylinositol-3-phosphate (PI3P) and phosphatidylinositol-4-phosphate (PI4P) lipids in order to form virion membranes. Mechanistically, mediates proper formation of OPG125-hexamers, and hence the honey comb lattice and spherical immature virus. In Homo sapiens (Human), this protein is Late protein OPG112 (OPG112).